We begin with the raw amino-acid sequence, 145 residues long: D-aminoacyl-tRNA deacylase (145 aa).

Positions 137–138 (GP) match the Gly-cisPro motif, important for rejection of L-amino acids motif.

This sequence belongs to the DTD family. Homodimer.

It is found in the cytoplasm. It carries out the reaction glycyl-tRNA(Ala) + H2O = tRNA(Ala) + glycine + H(+). It catalyses the reaction a D-aminoacyl-tRNA + H2O = a tRNA + a D-alpha-amino acid + H(+). Functionally, an aminoacyl-tRNA editing enzyme that deacylates mischarged D-aminoacyl-tRNAs. Also deacylates mischarged glycyl-tRNA(Ala), protecting cells against glycine mischarging by AlaRS. Acts via tRNA-based rather than protein-based catalysis; rejects L-amino acids rather than detecting D-amino acids in the active site. By recycling D-aminoacyl-tRNA to D-amino acids and free tRNA molecules, this enzyme counteracts the toxicity associated with the formation of D-aminoacyl-tRNA entities in vivo and helps enforce protein L-homochirality. The polypeptide is D-aminoacyl-tRNA deacylase (Pseudomonas fluorescens (strain SBW25)).